Consider the following 307-residue polypeptide: Olfactory receptor 5AC1 (307 aa).

Topologically, residues 1–28 are extracellular; that stretch reads MAEENKILVTHFVLTGLTDHPGLQAPLF. A helical membrane pass occupies residues 29-49; the sequence is LVFLVIYLITLVGNLGLMALI. The Cytoplasmic segment spans residues 50–56; sequence WKDPHLH. Residues 57–77 form a helical membrane-spanning segment; the sequence is TPIYLFLGSLAFADACTSSSV. Over 78–99 the chain is Extracellular; that stretch reads TSKMLINFLSKNHMLSMAKCAT. Cysteines 97 and 179 form a disulfide. The chain crosses the membrane as a helical span at residues 100-120; the sequence is QFYFFGSNATTECFLLVVMAY. Over 121 to 143 the chain is Cytoplasmic; sequence DRYVAICNPLLYPVVMSNSLCTQ. The chain crosses the membrane as a helical span at residues 144–164; it reads FIGISYFIGFLHSAIHVGLLF. Over 165–195 the chain is Extracellular; sequence RLTFCRSNIIHYFYCEILQLFKISCTNPTVN. The chain crosses the membrane as a helical span at residues 196–216; it reads ILLIFIFSAFIQVFTFMTLIV. Over 217 to 239 the chain is Cytoplasmic; the sequence is SYSYILSAILKKKSEKGRSKAFS. Residues 240 to 260 traverse the membrane as a helical segment; the sequence is TCSAHLLSVSLFYGTLFFMYV. Topologically, residues 261–271 are extracellular; that stretch reads SSRSGSAADQA. Residues 272-292 traverse the membrane as a helical segment; the sequence is KMYSLFYTIIIPLLNPFIYSL. The Cytoplasmic segment spans residues 293–307; sequence RNKEVIDALRRIMKK.

This sequence belongs to the G-protein coupled receptor 1 family.

The protein localises to the cell membrane. Functionally, odorant receptor. In Homo sapiens (Human), this protein is Olfactory receptor 5AC1 (OR5AC1).